Consider the following 89-residue polypeptide: Small ribosomal subunit protein uS17 (89 aa).

Belongs to the universal ribosomal protein uS17 family. In terms of assembly, part of the 30S ribosomal subunit.

Functionally, one of the primary rRNA binding proteins, it binds specifically to the 5'-end of 16S ribosomal RNA. In Lactiplantibacillus plantarum (strain ATCC BAA-793 / NCIMB 8826 / WCFS1) (Lactobacillus plantarum), this protein is Small ribosomal subunit protein uS17.